Here is a 389-residue protein sequence, read N- to C-terminus: Phospho-N-acetylmuramoyl-pentapeptide-transferase (389 aa).

10 helical membrane passes run 25–45 (RAVMATITALLIGLVCGPAVI), 73–93 (TMGGVLILLGIAVATLLWADL), 97–117 (FIWIVMLVTFGFGVIGWVDDY), 135–155 (FWQSVIGLFAAVYLAFSVSEA), 190–210 (ISYPLGVWGFIVLTYLVIVGA), 222–242 (GLVIMPVVLVGASLGVFAYVM), 259–279 (AGELLIFCSAMGGAGLAFLWF), 287–307 (FMGDVGALALGGALGTVAVIV), 311–331 (IVLFIMGGIFVAETLSVMLQV), and 366–386 (QVVVRFWIITLMLCLFGLSTL).

The protein belongs to the glycosyltransferase 4 family. MraY subfamily. Requires Mg(2+) as cofactor.

The protein resides in the cell inner membrane. It carries out the reaction UDP-N-acetyl-alpha-D-muramoyl-L-alanyl-gamma-D-glutamyl-meso-2,6-diaminopimeloyl-D-alanyl-D-alanine + di-trans,octa-cis-undecaprenyl phosphate = di-trans,octa-cis-undecaprenyl diphospho-N-acetyl-alpha-D-muramoyl-L-alanyl-D-glutamyl-meso-2,6-diaminopimeloyl-D-alanyl-D-alanine + UMP. It participates in cell wall biogenesis; peptidoglycan biosynthesis. Its function is as follows. Catalyzes the initial step of the lipid cycle reactions in the biosynthesis of the cell wall peptidoglycan: transfers peptidoglycan precursor phospho-MurNAc-pentapeptide from UDP-MurNAc-pentapeptide onto the lipid carrier undecaprenyl phosphate, yielding undecaprenyl-pyrophosphoryl-MurNAc-pentapeptide, known as lipid I. In Paraburkholderia phytofirmans (strain DSM 17436 / LMG 22146 / PsJN) (Burkholderia phytofirmans), this protein is Phospho-N-acetylmuramoyl-pentapeptide-transferase.